We begin with the raw amino-acid sequence, 387 residues long: Phosphoglycerate kinase (387 aa).

Residues 21–23, arginine 36, 59–62, arginine 113, and arginine 146 each bind substrate; these read DLN and HLGR. ATP is bound by residues lysine 197, glutamate 314, and 340 to 343; that span reads GGDT.

Belongs to the phosphoglycerate kinase family. Monomer.

It is found in the cytoplasm. The catalysed reaction is (2R)-3-phosphoglycerate + ATP = (2R)-3-phospho-glyceroyl phosphate + ADP. Its pathway is carbohydrate degradation; glycolysis; pyruvate from D-glyceraldehyde 3-phosphate: step 2/5. This chain is Phosphoglycerate kinase, found in Yersinia enterocolitica serotype O:8 / biotype 1B (strain NCTC 13174 / 8081).